Reading from the N-terminus, the 296-residue chain is tRNA (guanine-N(7)-)-methyltransferase (296 aa).

The tract at residues 1-26 (MSKRTREESEMEAGPSTASPGVSVSP) is disordered. Residues glycine 101, 124-125 (EI), 168-169 (NS), and leucine 188 each bind S-adenosyl-L-methionine. Residue aspartate 191 is part of the active site. 266-268 (TEE) contributes to the S-adenosyl-L-methionine binding site.

Belongs to the class I-like SAM-binding methyltransferase superfamily. TrmB family. Forms a complex with TRM82.

It is found in the nucleus. It catalyses the reaction guanosine(46) in tRNA + S-adenosyl-L-methionine = N(7)-methylguanosine(46) in tRNA + S-adenosyl-L-homocysteine. It participates in tRNA modification; N(7)-methylguanine-tRNA biosynthesis. Its function is as follows. Catalyzes the formation of N(7)-methylguanine at position 46 (m7G46) in tRNA. In Cryptococcus neoformans var. neoformans serotype D (strain JEC21 / ATCC MYA-565) (Filobasidiella neoformans), this protein is tRNA (guanine-N(7)-)-methyltransferase.